The chain runs to 196 residues: Molybdenum cofactor guanylyltransferase (196 aa).

Residues 10–12, Lys-23, Asn-51, Asp-69, and Asp-99 contribute to the GTP site; that span reads LAG. Asp-99 contributes to the Mg(2+) binding site.

The protein belongs to the MobA family. In terms of assembly, monomer. Mg(2+) is required as a cofactor.

It is found in the cytoplasm. It catalyses the reaction Mo-molybdopterin + GTP + H(+) = Mo-molybdopterin guanine dinucleotide + diphosphate. Functionally, transfers a GMP moiety from GTP to Mo-molybdopterin (Mo-MPT) cofactor (Moco or molybdenum cofactor) to form Mo-molybdopterin guanine dinucleotide (Mo-MGD) cofactor. The protein is Molybdenum cofactor guanylyltransferase of Shewanella amazonensis (strain ATCC BAA-1098 / SB2B).